Consider the following 244-residue polypeptide: Phosphoadenosine 5'-phosphosulfate reductase (244 aa).

Residue Cys-239 is the Nucleophile; cysteine thiosulfonate intermediate of the active site.

It belongs to the PAPS reductase family. CysH subfamily.

It is found in the cytoplasm. It catalyses the reaction [thioredoxin]-disulfide + sulfite + adenosine 3',5'-bisphosphate + 2 H(+) = [thioredoxin]-dithiol + 3'-phosphoadenylyl sulfate. It participates in sulfur metabolism; hydrogen sulfide biosynthesis; sulfite from sulfate: step 3/3. Catalyzes the formation of sulfite from phosphoadenosine 5'-phosphosulfate (PAPS) using thioredoxin as an electron donor. The sequence is that of Phosphoadenosine 5'-phosphosulfate reductase from Klebsiella pneumoniae subsp. pneumoniae (strain ATCC 700721 / MGH 78578).